Reading from the N-terminus, the 505-residue chain is Flagellin (505 aa).

Belongs to the bacterial flagellin family.

It localises to the secreted. It is found in the bacterial flagellum. In terms of biological role, flagellin is the subunit protein which polymerizes to form the filaments of bacterial flagella. The polypeptide is Flagellin (fliC) (Salmonella rostock).